Here is a 472-residue protein sequence, read N- to C-terminus: Glutamate--tRNA ligase (472 aa).

A 'HIGH' region motif is present at residues 10-20 (PSPTGYLHVGG). Zn(2+) is bound by residues cysteine 99, cysteine 101, cysteine 126, and aspartate 128. The short motif at 238–242 (KLSKR) is the 'KMSKS' region element. Lysine 241 contacts ATP.

Belongs to the class-I aminoacyl-tRNA synthetase family. Glutamate--tRNA ligase type 1 subfamily. As to quaternary structure, monomer. The cofactor is Zn(2+).

It localises to the cytoplasm. The enzyme catalyses tRNA(Glu) + L-glutamate + ATP = L-glutamyl-tRNA(Glu) + AMP + diphosphate. Catalyzes the attachment of glutamate to tRNA(Glu) in a two-step reaction: glutamate is first activated by ATP to form Glu-AMP and then transferred to the acceptor end of tRNA(Glu). This Photorhabdus laumondii subsp. laumondii (strain DSM 15139 / CIP 105565 / TT01) (Photorhabdus luminescens subsp. laumondii) protein is Glutamate--tRNA ligase.